We begin with the raw amino-acid sequence, 82 residues long: Protein transport protein SBH1 (82 aa).

Positions 1-36 (MSSPTPPGGQRTLQKRKQGSSQKVAASAPKKNTNSN) are disordered. The Cytoplasmic portion of the chain corresponds to 1-53 (MSSPTPPGGQRTLQKRKQGSSQKVAASAPKKNTNSNNSILKIYSDEATGLRVD). Residues 19 to 36 (GSSQKVAASAPKKNTNSN) are compositionally biased toward polar residues. A helical membrane pass occupies residues 54–74 (PLVVLFLAVGFIFSVVALHVI).

The protein belongs to the SEC61-beta family. In terms of assembly, component of the heterotrimeric Sec61 complex, which is composed of SSH1, SBH1 and SSS1. Presumably three to four Sec61 heterotrimers assemble into an oligomeric ring with a central aqueous pore. In cotranslational ER import, the pore diameter varies from 9-15 A in a ribosome-free resting state to 40-60 A in a functional state when associated with the ribosome. The Sec61 complex is part of a channel-forming translocon complex whose composition seem to change dependent upon different functional states. During post-translational ER import the Sec61 complex associates with the Sec62/63 complex to form the Sec complex. SBH1 interacts OST2, OST4 and WBP1 components of the OT complex.

It is found in the endoplasmic reticulum membrane. Functionally, part of the Sec61 complex, which is the major component of a channel-forming translocon complex that mediates protein translocation across the endoplasmic reticulum (ER). The functional states of the translocon complex include co- and post-translational ER import, cotranslational membrane protein integration and retrograde transport of misfolded proteins out of the ER. In the cotranslational pathway, ribosomes synthesizing presecretory proteins are targeted to the translocon by the cytosolic signal recognition particle (SRP) and its ER-localized receptor. The association of the Sec61 complex with the ribosome is mediated by the 28S rRNA of the large ribosomal subunit. SRP-independent post-translational translocation requires the association of additional factors, such as the Sec62/63 complex and KAR2. The sequence is that of Protein transport protein SBH1 (SBH1) from Saccharomyces cerevisiae (strain ATCC 204508 / S288c) (Baker's yeast).